We begin with the raw amino-acid sequence, 179 residues long: Large ribosomal subunit protein uL6 (179 aa).

It belongs to the universal ribosomal protein uL6 family. Part of the 50S ribosomal subunit.

This protein binds to the 23S rRNA, and is important in its secondary structure. It is located near the subunit interface in the base of the L7/L12 stalk, and near the tRNA binding site of the peptidyltransferase center. This is Large ribosomal subunit protein uL6 from Rhodococcus opacus (strain B4).